Here is a 433-residue protein sequence, read N- to C-terminus: 5-methylthioadenosine/S-adenosylhomocysteine deaminase (433 aa).

Residues His-67 and His-69 each contribute to the Zn(2+) site. Positions 96, 148, and 186 each coordinate substrate. Residue His-213 coordinates Zn(2+). Substrate is bound by residues Glu-216 and Asp-301. Zn(2+) is bound at residue Asp-301.

It belongs to the metallo-dependent hydrolases superfamily. MTA/SAH deaminase family. Requires Zn(2+) as cofactor.

It carries out the reaction S-adenosyl-L-homocysteine + H2O + H(+) = S-inosyl-L-homocysteine + NH4(+). The catalysed reaction is S-methyl-5'-thioadenosine + H2O + H(+) = S-methyl-5'-thioinosine + NH4(+). Functionally, catalyzes the deamination of 5-methylthioadenosine and S-adenosyl-L-homocysteine into 5-methylthioinosine and S-inosyl-L-homocysteine, respectively. Is also able to deaminate adenosine. This is 5-methylthioadenosine/S-adenosylhomocysteine deaminase from Desulforamulus reducens (strain ATCC BAA-1160 / DSM 100696 / MI-1) (Desulfotomaculum reducens).